The primary structure comprises 368 residues: Homoserine O-acetyltransferase (368 aa).

Residues 43–354 form the AB hydrolase-1 domain; the sequence is NVVVVCHALT…DYGHDAFLVE (312 aa). Ser-148 acts as the Nucleophile in catalysis. Position 220 (Arg-220) interacts with substrate. Active-site residues include Asp-314 and His-348. A substrate-binding site is contributed by Asp-349.

It belongs to the AB hydrolase superfamily. MetX family. As to quaternary structure, homodimer.

The protein localises to the cytoplasm. The enzyme catalyses L-homoserine + acetyl-CoA = O-acetyl-L-homoserine + CoA. It functions in the pathway amino-acid biosynthesis; L-methionine biosynthesis via de novo pathway; O-acetyl-L-homoserine from L-homoserine: step 1/1. Functionally, transfers an acetyl group from acetyl-CoA to L-homoserine, forming acetyl-L-homoserine. This chain is Homoserine O-acetyltransferase, found in Sulfurimonas autotrophica (strain ATCC BAA-671 / DSM 16294 / JCM 11897 / OK10).